The sequence spans 477 residues: Small ribosomal subunit protein uS5m (477 aa).

This sequence belongs to the universal ribosomal protein uS5 family. Component of the mitochondrial small ribosomal subunit (mt-SSU). Mature N.crassa 74S mitochondrial ribosomes consist of a small (37S) and a large (54S) subunit. The 37S small subunit contains a 16S ribosomal RNA (16S mt-rRNA) and 32 different proteins. The 54S large subunit contains a 23S rRNA (23S mt-rRNA) and 42 different proteins. uS3m, uS4m and uS5m form the narrow entry site of the mRNA channel.

Its subcellular location is the mitochondrion. Component of the mitochondrial ribosome (mitoribosome), a dedicated translation machinery responsible for the synthesis of mitochondrial genome-encoded proteins, including at least some of the essential transmembrane subunits of the mitochondrial respiratory chain. The mitoribosomes are attached to the mitochondrial inner membrane and translation products are cotranslationally integrated into the membrane. The chain is Small ribosomal subunit protein uS5m (mrps5) from Neurospora crassa (strain ATCC 24698 / 74-OR23-1A / CBS 708.71 / DSM 1257 / FGSC 987).